Consider the following 424-residue polypeptide: Phosphomethylpyrimidine synthase (424 aa).

Substrate-binding positions include methionine 94, tyrosine 123, histidine 162, 184-186 (SRG), 225-228 (NGMR), and glutamate 264. Histidine 268 is a binding site for Zn(2+). Tyrosine 291 lines the substrate pocket. A Zn(2+)-binding site is contributed by histidine 332. The [4Fe-4S] cluster site is built by cysteine 406, cysteine 409, and cysteine 413.

Belongs to the ThiC family. It depends on [4Fe-4S] cluster as a cofactor.

It carries out the reaction 5-amino-1-(5-phospho-beta-D-ribosyl)imidazole + S-adenosyl-L-methionine = 4-amino-2-methyl-5-(phosphooxymethyl)pyrimidine + CO + 5'-deoxyadenosine + formate + L-methionine + 3 H(+). Its pathway is cofactor biosynthesis; thiamine diphosphate biosynthesis. Its function is as follows. Catalyzes the synthesis of the hydroxymethylpyrimidine phosphate (HMP-P) moiety of thiamine from aminoimidazole ribotide (AIR) in a radical S-adenosyl-L-methionine (SAM)-dependent reaction. The chain is Phosphomethylpyrimidine synthase from Methanosphaerula palustris (strain ATCC BAA-1556 / DSM 19958 / E1-9c).